We begin with the raw amino-acid sequence, 305 residues long: Tyrosine recombinase XerC (305 aa).

The Core-binding (CB) domain maps to 4-95 (TSIQALINKW…AVKNFYRFLE (92 aa)). The region spanning 116-298 (LLPKALSEDD…SIKHLEAVYT (183 aa)) is the Tyr recombinase domain. Catalysis depends on residues R159, K182, H250, R253, and H276. Y285 functions as the O-(3'-phospho-DNA)-tyrosine intermediate in the catalytic mechanism.

Belongs to the 'phage' integrase family. XerC subfamily. Forms a cyclic heterotetrameric complex composed of two molecules of XerC and two molecules of XerD.

Its subcellular location is the cytoplasm. Site-specific tyrosine recombinase, which acts by catalyzing the cutting and rejoining of the recombining DNA molecules. The XerC-XerD complex is essential to convert dimers of the bacterial chromosome into monomers to permit their segregation at cell division. It also contributes to the segregational stability of plasmids. This is Tyrosine recombinase XerC from Rickettsia conorii (strain ATCC VR-613 / Malish 7).